The following is a 616-amino-acid chain: Dihydroxy-acid dehydratase (616 aa).

Asp81 contributes to the Mg(2+) binding site. Cys122 serves as a coordination point for [2Fe-2S] cluster. Asp123 and Lys124 together coordinate Mg(2+). Position 124 is an N6-carboxylysine (Lys124). Cys195 contributes to the [2Fe-2S] cluster binding site. A Mg(2+)-binding site is contributed by Glu491. The active-site Proton acceptor is the Ser517.

Belongs to the IlvD/Edd family. Homodimer. [2Fe-2S] cluster is required as a cofactor. The cofactor is Mg(2+).

It catalyses the reaction (2R)-2,3-dihydroxy-3-methylbutanoate = 3-methyl-2-oxobutanoate + H2O. The catalysed reaction is (2R,3R)-2,3-dihydroxy-3-methylpentanoate = (S)-3-methyl-2-oxopentanoate + H2O. It functions in the pathway amino-acid biosynthesis; L-isoleucine biosynthesis; L-isoleucine from 2-oxobutanoate: step 3/4. Its pathway is amino-acid biosynthesis; L-valine biosynthesis; L-valine from pyruvate: step 3/4. Functionally, functions in the biosynthesis of branched-chain amino acids. Catalyzes the dehydration of (2R,3R)-2,3-dihydroxy-3-methylpentanoate (2,3-dihydroxy-3-methylvalerate) into 2-oxo-3-methylpentanoate (2-oxo-3-methylvalerate) and of (2R)-2,3-dihydroxy-3-methylbutanoate (2,3-dihydroxyisovalerate) into 2-oxo-3-methylbutanoate (2-oxoisovalerate), the penultimate precursor to L-isoleucine and L-valine, respectively. The polypeptide is Dihydroxy-acid dehydratase (Sodalis glossinidius (strain morsitans)).